Here is a 1000-residue protein sequence, read N- to C-terminus: Probable coatomer subunit beta' (1000 aa).

WD repeat units follow at residues 13 to 52 (ARSD…LVKS), 55 to 94 (VCDV…RVHQ), 97 to 136 (AHSD…AMKQ), 140 to 180 (GHTH…PNFT), 183 to 224 (GHEK…CVQT), 227 to 266 (GHAQ…LETT), and 351 to 391 (LGSS…NKDF). Residues 863–1000 (PRQTETQLKA…MDDLNLDEED (138 aa)) form a disordered region. Residues 901-915 (EPEEEEEQEEFDDDQ) are compositionally biased toward acidic residues. Positions 960–969 (SASSQQSAQD) are enriched in low complexity. Residues 970-1000 (FQDDTQWSDEDFGDAENGDLNMDDLNLDEED) are compositionally biased toward acidic residues.

The protein belongs to the WD repeat COPB2 family. In terms of assembly, oligomeric complex that consists of at least the alpha, beta, beta', gamma, delta, epsilon and zeta subunits.

The protein localises to the cytoplasm. It is found in the golgi apparatus membrane. Its subcellular location is the cytoplasmic vesicle. The protein resides in the COPI-coated vesicle membrane. In terms of biological role, the coatomer is a cytosolic protein complex that binds to dilysine motifs and reversibly associates with Golgi non-clathrin-coated vesicles, which further mediate biosynthetic protein transport from the ER, via the Golgi up to the trans Golgi network. Coatomer complex is required for budding from Golgi membranes, and is essential for the retrograde Golgi-to-ER transport of dilysine-tagged proteins. The polypeptide is Probable coatomer subunit beta' (copb-2) (Caenorhabditis elegans).